The sequence spans 514 residues: 2,3-bisphosphoglycerate-independent phosphoglycerate mutase (514 aa).

Residues aspartate 14 and serine 64 each contribute to the Mn(2+) site. Residue serine 64 is the Phosphoserine intermediate of the active site. Residues histidine 125, 155–156, arginine 187, arginine 193, 263–266, and lysine 336 each bind substrate; these read RD and RADR. Residues aspartate 403, histidine 407, aspartate 444, histidine 445, and histidine 463 each contribute to the Mn(2+) site.

This sequence belongs to the BPG-independent phosphoglycerate mutase family. As to quaternary structure, monomer. The cofactor is Mn(2+).

It carries out the reaction (2R)-2-phosphoglycerate = (2R)-3-phosphoglycerate. Its pathway is carbohydrate degradation; glycolysis; pyruvate from D-glyceraldehyde 3-phosphate: step 3/5. Functionally, catalyzes the interconversion of 2-phosphoglycerate and 3-phosphoglycerate. The sequence is that of 2,3-bisphosphoglycerate-independent phosphoglycerate mutase from Shewanella pealeana (strain ATCC 700345 / ANG-SQ1).